Consider the following 535-residue polypeptide: MYFSYIGYFFLPPLVAVPAAAPPVCQPKSATNGHHPVPRLSISSRATVVARMEGASQGGLQTVMKWKTVVAIFVVVVVYLVTGGLVFRALEQPFESSQKNTIALEKAEFLRDHICVSPQELETLIQHALDADNAGVSPVGNSSNSSSHWDLGSAFFFAGTVITTIGYGNIAPSTEGGKIFCILYAIFGIPLFGFLLAGIGDQLGTIFGKSIARVEKVFRKKQVSQTKIRVISTILFILAGCIVFVTIPAVIFKYIEGWTALESIYFVVVTLTTVGFGDFVAGGNAGINYREWYKPLVWFWILVGLAYFAAVLSMIGDWLRVLSKKTKEEVGEIKAHAAEWKANVTAEFRETRRRLSVEIHDKLQRAATIRSMERRRLGLDQRAHSLDMLSPEKRSVFAALDTGRFKASSQESINNRPNNLRLKGPEQLTKHGQGASEDNIINKFGSTSKLTKRKNKDLKKTLPEDVQKIYKTFRNYSLDEEKKEDETEKMCNSDNSSTAMLTECIQQQAEMENGMVPTDTKDQGLENNSLLEDRN.

At 1–68 the chain is on the cytoplasmic side; the sequence is MYFSYIGYFF…GLQTVMKWKT (68 aa). A helical membrane pass occupies residues 69-89; the sequence is VVAIFVVVVVYLVTGGLVFRA. The pore-forming intramembrane region spans 151 to 177; the sequence is LGSAFFFAGTVITTIGYGNIAPSTEGG. K(+) is bound by residues Thr164, Ile165, Gly166, and Tyr167. The tract at residues 164 to 169 is selectivity filter 1; sequence TIGYGN. Residues 179–199 form a helical membrane-spanning segment; the sequence is IFCILYAIFGIPLFGFLLAGI. Topologically, residues 200 to 230 are cytoplasmic; sequence GDQLGTIFGKSIARVEKVFRKKQVSQTKIRV. A helical membrane pass occupies residues 231 to 251; it reads ISTILFILAGCIVFVTIPAVI. The segment at residues 260 to 291 is an intramembrane region (pore-forming); that stretch reads ALESIYFVVVTLTTVGFGDFVAGGNAGINYRE. 4 residues coordinate K(+): Thr273, Val274, Gly275, and Phe276. The tract at residues 273 to 278 is selectivity filter 2; sequence TVGFGD. Residues 296–316 traverse the membrane as a helical segment; the sequence is LVWFWILVGLAYFAAVLSMIG. Topologically, residues 317–535 are cytoplasmic; the sequence is DWLRVLSKKT…ENNSLLEDRN (219 aa). Disordered regions lie at residues 410 to 438 and 510 to 535; these read QESI…ASED and EMEN…EDRN. A compositionally biased stretch (polar residues) spans 525 to 535; it reads LENNSLLEDRN.

In terms of assembly, homodimer; disulfide-linked. Forms heterodimers with other 2-pore domain K(+) channel subunits, such as KCNK2, KCNK4 and KCNK18. As to expression, detected in dorsal root ganglia (DRG) neurons (at protein level).

Its subcellular location is the cell membrane. The enzyme catalyses K(+)(in) = K(+)(out). It catalyses the reaction Rb(+)(in) = Rb(+)(out). The catalysed reaction is Cs(+)(in) = Cs(+)(out). Activated by stimuli such as mechanical stretch, acidic pH and polyunsaturated free fatty acids. Activated by a dihydroacridine analog, ML67-33. Inhibited by polycationic dye ruthenium red. Selectively activated by T2A3 (2-[(4-chloro-3-methylphenyl)amino] benzoic acid). Functionally, k(+) channel that conducts voltage-dependent outward rectifying currents upon membrane depolarization. Voltage sensing is coupled to K(+) electrochemical gradient in an 'ion flux gating' mode where outward but not inward ion flow opens the gate. Converts to voltage-independent 'leak' conductance mode upon stimulation by various stimuli including mechanical membrane stretch, acidic pH, heat and lipids. Homo- and heterodimerizes to form functional channels with distinct regulatory and gating properties. In trigeminal ganglia sensory neurons, the heterodimer of KCNK10/TREK-2 and KCNK18/TRESK inhibits neuronal firing and neurogenic inflammation by stabilizing the resting membrane potential at K(+) equilibrium potential as well as by regulating the threshold of action potentials and the spike frequency. Permeable to other monovalent ions such as Rb(+) and Cs(+). This chain is Potassium channel subfamily K member 10, found in Mus musculus (Mouse).